Here is a 706-residue protein sequence, read N- to C-terminus: DNA ligase (706 aa).

NAD(+)-binding positions include Asp47 to Asp51, Ser96 to Ile97, and Glu133. Lys135 acts as the N6-AMP-lysine intermediate in catalysis. Positions 156, 192, 323, and 347 each coordinate NAD(+). Residues Cys441, Cys444, Cys459, and Cys465 each contribute to the Zn(2+) site. Positions Val624–Glu706 constitute a BRCT domain.

It belongs to the NAD-dependent DNA ligase family. LigA subfamily. Requires Mg(2+) as cofactor. The cofactor is Mn(2+).

The catalysed reaction is NAD(+) + (deoxyribonucleotide)n-3'-hydroxyl + 5'-phospho-(deoxyribonucleotide)m = (deoxyribonucleotide)n+m + AMP + beta-nicotinamide D-nucleotide.. In terms of biological role, DNA ligase that catalyzes the formation of phosphodiester linkages between 5'-phosphoryl and 3'-hydroxyl groups in double-stranded DNA using NAD as a coenzyme and as the energy source for the reaction. It is essential for DNA replication and repair of damaged DNA. The polypeptide is DNA ligase (Polaromonas sp. (strain JS666 / ATCC BAA-500)).